Here is a 519-residue protein sequence, read N- to C-terminus: GTPase Der (519 aa).

2 stretches are compositionally biased toward acidic residues: residues 1 to 12 and 30 to 54; these read MDVEGAFADEEE and GYED…PDFG. The segment at 1 to 54 is disordered; sequence MDVEGAFADEEELAPHGGWASADFDPAEFGYEDSDDDFDAEDFDETEFSNPDFG. EngA-type G domains follow at residues 81 to 244 and 254 to 427; these read CTVA…PEEP and RRVA…DNWD. GTP contacts are provided by residues 87-94, 134-138, 196-199, 260-267, 307-311, and 372-375; these read GRPNVGKS, DTGGW, NKFD, GKPNVGKS, DTAGL, and NKWD. A KH-like domain is found at 428 to 510; that stretch reads RRISTGQLNT…PVRIAVRVRE (83 aa).

This sequence belongs to the TRAFAC class TrmE-Era-EngA-EngB-Septin-like GTPase superfamily. EngA (Der) GTPase family. As to quaternary structure, associates with the 50S ribosomal subunit.

Functionally, GTPase that plays an essential role in the late steps of ribosome biogenesis. In Corynebacterium glutamicum (strain ATCC 13032 / DSM 20300 / JCM 1318 / BCRC 11384 / CCUG 27702 / LMG 3730 / NBRC 12168 / NCIMB 10025 / NRRL B-2784 / 534), this protein is GTPase Der.